The primary structure comprises 79 residues: Acyl carrier protein (79 aa).

Residues 2–77 (SEVAEKVKKI…DAIDYIEKKK (76 aa)) form the Carrier domain. Residue Ser37 is modified to O-(pantetheine 4'-phosphoryl)serine.

Belongs to the acyl carrier protein (ACP) family. 4'-phosphopantetheine is transferred from CoA to a specific serine of apo-ACP by AcpS. This modification is essential for activity because fatty acids are bound in thioester linkage to the sulfhydryl of the prosthetic group.

It is found in the cytoplasm. It participates in lipid metabolism; fatty acid biosynthesis. In terms of biological role, carrier of the growing fatty acid chain in fatty acid biosynthesis. This is Acyl carrier protein from Acidiphilium cryptum (strain JF-5).